A 291-amino-acid polypeptide reads, in one-letter code: Meteorin (291 aa).

The first 21 residues, 1-21 (MLVATLLCALCCGLLAASAHA), serve as a signal peptide directing secretion. Disulfide bonds link C28–C49, C80–C116, C169–C240, C172–C264, and C182–C286.

Belongs to the meteorin family. In terms of assembly, monomer. Highly expressed in brain. Expressed in undifferentiated neural progenitors and in astrocyte lineage, particularly in Bergmann glia, a subtype of radial glia, and a few discrete neuronal populations residing in the superior colliculus, the ocular motor nucleus, the raphe and pontine nuclei, and in various thalamic nuclei. Weakly expressed in heart, kidney, skeletal muscle, spleen, testis, gut and lung.

The protein resides in the secreted. Its function is as follows. Involved in both glial cell differentiation and axonal network formation during neurogenesis. Promotes astrocyte differentiation and transforms cerebellar astrocytes into radial glia. Also induces axonal extension in small and intermediate neurons of sensory ganglia by activating nearby satellite glia. This chain is Meteorin (Metrn), found in Mus musculus (Mouse).